The following is a 430-amino-acid chain: Histidine--tRNA ligase (430 aa).

This sequence belongs to the class-II aminoacyl-tRNA synthetase family. Homodimer.

The protein resides in the cytoplasm. The catalysed reaction is tRNA(His) + L-histidine + ATP = L-histidyl-tRNA(His) + AMP + diphosphate + H(+). In Lactococcus lactis subsp. cremoris (strain MG1363), this protein is Histidine--tRNA ligase.